Consider the following 594-residue polypeptide: Tyrosine-protein kinase RYK (594 aa).

An N-terminal signal peptide occupies residues 1 to 34 (MRAGRGGVPGSGGLRAPPPPLLLLLLAMLPAAAP). Topologically, residues 35–211 (RSPALAAAPA…VHAAPTTSTR (177 aa)) are extracellular. The WIF domain maps to 50–178 (LYLSEDEVRR…VLNFKRRKMC (129 aa)). 5 N-linked (GlcNAc...) asparagine glycosylation sites follow: Asn123, Asn158, Asn162, Asn166, and Asn193. A helical membrane pass occupies residues 212 to 239 (VFYISVGVCCAVIFLVAIILAVLHLHSM). The Cytoplasmic segment spans residues 240 to 594 (KRIELDDSIS…EFHAALGAYV (355 aa)). Over residues 250–266 (ASSSSQGLSQPSTQTTQ) the composition is skewed to low complexity. The segment at 250 to 283 (ASSSSQGLSQPSTQTTQYLRADTPNNATPITSSS) is disordered. Residues 272-283 (TPNNATPITSSS) show a composition bias toward polar residues. The region spanning 317–590 (ITLKDVLQEG…QCLTEFHAAL (274 aa)) is the Protein kinase domain. Residues 323 to 331 (LQEGTFGRI) and Lys351 each bind ATP. Asp452 acts as the Proton acceptor in catalysis. A Phosphotyrosine; by autocatalysis modification is found at Tyr482.

Belongs to the protein kinase superfamily. Tyr protein kinase family. In terms of assembly, interacts with DVL1 (via PDZ domain). In terms of processing, proteolytically cleaved, in part by presenilin, in response to WNT3 stimulation. As to expression, is detected in all the tissues. Highest levels are seen in the ovary, lung and placenta.

Its subcellular location is the membrane. It localises to the nucleus. The protein resides in the cytoplasm. The enzyme catalyses L-tyrosyl-[protein] + ATP = O-phospho-L-tyrosyl-[protein] + ADP + H(+). Functionally, may be a coreceptor along with FZD8 of Wnt proteins, such as WNT1, WNT3, WNT3A and WNT5A. Involved in neuron differentiation, axon guidance, corpus callosum establishment and neurite outgrowth. In response to WNT3 stimulation, receptor C-terminal cleavage occurs in its transmembrane region and allows the C-terminal intracellular product to translocate from the cytoplasm to the nucleus where it plays a crucial role in neuronal development. The protein is Tyrosine-protein kinase RYK (Ryk) of Mus musculus (Mouse).